A 103-amino-acid polypeptide reads, in one-letter code: Co-chaperonin GroES (103 aa).

Residues glycine 31–valine 67 form a disordered region.

The protein belongs to the GroES chaperonin family. As to quaternary structure, heptamer of 7 subunits arranged in a ring. Interacts with the chaperonin GroEL.

The protein resides in the cytoplasm. Functionally, together with the chaperonin GroEL, plays an essential role in assisting protein folding. The GroEL-GroES system forms a nano-cage that allows encapsulation of the non-native substrate proteins and provides a physical environment optimized to promote and accelerate protein folding. GroES binds to the apical surface of the GroEL ring, thereby capping the opening of the GroEL channel. The polypeptide is Co-chaperonin GroES (Prochlorococcus marinus (strain NATL2A)).